The chain runs to 107 residues: MEMKTDAKIRVRLESFNHELLNSSCQKIVNILQNTLSNSIGVITLPTRKRIYCVLRSPHVDKDSREHFEIRTHKRILEIYYNSEVPIFDLLSEADLPPGVFYRICLS.

This sequence belongs to the universal ribosomal protein uS10 family. As to quaternary structure, part of the 30S ribosomal subunit.

It is found in the plastid. The protein localises to the chloroplast. In terms of biological role, involved in the binding of tRNA to the ribosomes. The chain is Small ribosomal subunit protein uS10c from Phaeodactylum tricornutum (strain CCAP 1055/1).